A 311-amino-acid chain; its full sequence is MSNASLVTAFILTGLPHAPGLDALLFGIFLVVYVLTVLGNLLILLVIRVDSHLHTPMYYFLTNLSFIDMWFSTVTVPKMLMTLVSPSGRAISFHSCVAQLYFFHFLGSTECFLYTVMSYDRYLAISYPLRYTSMMSGSRCALLATGTWLSGSLHSAVQTILTFHLPYCGPNQIQHYFCDAPPILKLACADTSANVMVIFVDIGIVASGCFVLIVLSYVSIVCSILRIRTSDGRRRAFQTCASHCIVVLCFFVPCVVIYLRPGSMDAMDGVVAIFYTVLTPLLNPVVYTLRNKEVKKAVLKLRDKVAHPQRK.

Topologically, residues 1 to 23 are extracellular; that stretch reads MSNASLVTAFILTGLPHAPGLDA. Residue Asn3 is glycosylated (N-linked (GlcNAc...) asparagine). A helical membrane pass occupies residues 24 to 44; the sequence is LLFGIFLVVYVLTVLGNLLIL. Topologically, residues 45–52 are cytoplasmic; it reads LVIRVDSH. A helical membrane pass occupies residues 53–73; sequence LHTPMYYFLTNLSFIDMWFST. Over 74–98 the chain is Extracellular; the sequence is VTVPKMLMTLVSPSGRAISFHSCVA. An intrachain disulfide couples Cys96 to Cys188. Residues 99 to 119 form a helical membrane-spanning segment; it reads QLYFFHFLGSTECFLYTVMSY. Topologically, residues 120-138 are cytoplasmic; sequence DRYLAISYPLRYTSMMSGS. The chain crosses the membrane as a helical span at residues 139–159; the sequence is RCALLATGTWLSGSLHSAVQT. Residues 160 to 196 lie on the Extracellular side of the membrane; sequence ILTFHLPYCGPNQIQHYFCDAPPILKLACADTSANVM. A helical transmembrane segment spans residues 197-216; sequence VIFVDIGIVASGCFVLIVLS. The Cytoplasmic segment spans residues 217–236; that stretch reads YVSIVCSILRIRTSDGRRRA. Residues 237 to 257 traverse the membrane as a helical segment; the sequence is FQTCASHCIVVLCFFVPCVVI. The Extracellular segment spans residues 258–268; it reads YLRPGSMDAMD. Residues 269-289 form a helical membrane-spanning segment; the sequence is GVVAIFYTVLTPLLNPVVYTL. The Cytoplasmic portion of the chain corresponds to 290 to 311; it reads RNKEVKKAVLKLRDKVAHPQRK.

It belongs to the G-protein coupled receptor 1 family.

The protein localises to the cell membrane. Functionally, odorant receptor. The protein is Olfactory receptor 10G4 (OR10G4) of Homo sapiens (Human).